A 127-amino-acid polypeptide reads, in one-letter code: Dual endothelin-1/VEGF signal peptide receptor (127 aa).

At 1–65 the chain is on the extracellular side; sequence MNALYVTTVP…EMKSRWNWGS (65 aa). Residues 66–84 form a helical membrane-spanning segment; it reads ITCIICFTCVGSQLSMSSS. Topologically, residues 85 to 127 are cytoplasmic; that stretch reads KASNFSGPLQLYQRGIGHITNSYKRPQAPAWPCLSSGTMGRSH.

In terms of tissue distribution, widely expressed with higher levels in kidney and aorta.

It is found in the cell membrane. Its function is as follows. Dual receptor for both endothelin-1 and the signal sequence of vascular endothelial growth factor A. Does not act as a receptor for angiotensin-2. Does not bind the VEGFA mature protein. May play a role in angiogenesis with a significant role in cardiovascular and neural development. In Mus musculus (Mouse), this protein is Dual endothelin-1/VEGF signal peptide receptor.